Consider the following 236-residue polypeptide: Ribose-5-phosphate isomerase A (236 aa).

Substrate-binding positions include 31-34, 84-87, and 97-100; these read TGST, DGAD, and KGGG. Glutamate 106 functions as the Proton acceptor in the catalytic mechanism. Lysine 124 lines the substrate pocket.

The protein belongs to the ribose 5-phosphate isomerase family. In terms of assembly, homodimer.

The enzyme catalyses aldehydo-D-ribose 5-phosphate = D-ribulose 5-phosphate. It participates in carbohydrate degradation; pentose phosphate pathway; D-ribose 5-phosphate from D-ribulose 5-phosphate (non-oxidative stage): step 1/1. In terms of biological role, catalyzes the reversible conversion of ribose-5-phosphate to ribulose 5-phosphate. This chain is Ribose-5-phosphate isomerase A, found in Polynucleobacter necessarius subsp. necessarius (strain STIR1).